We begin with the raw amino-acid sequence, 118 residues long: Large ribosomal subunit protein bL19 (118 aa).

This sequence belongs to the bacterial ribosomal protein bL19 family.

This protein is located at the 30S-50S ribosomal subunit interface and may play a role in the structure and function of the aminoacyl-tRNA binding site. This is Large ribosomal subunit protein bL19 from Salinispora arenicola (strain CNS-205).